The following is a 1174-amino-acid chain: K(+) efflux antiporter 2, chloroplastic (1174 aa).

A chloroplast-targeting transit peptide spans 1 to 57 (MDFASSVQRQSMFHGGADFASYCLPNRMISAKLCPKGLGGTRFWDPMIDSKVRSAIR). Residues 58–565 (SKRNVSYRSS…MFPQQEVNEE (508 aa)) lie on the Stromal side of the membrane. The interval 119-141 (GSDDREVTFSKEEKDTREQDSAP) is disordered. Residues 142–350 (SLEELRDLLN…ALQRAEKTLF (209 aa)) adopt a coiled-coil conformation. K170 carries the N6-acetyllysine; by NSI modification. Positions 420-448 (EAEGEAEKSKNVVLTKKQEVQKDLPRESS) are enriched in basic and acidic residues. The disordered stretch occupies residues 420-457 (EAEGEAEKSKNVVLTKKQEVQKDLPRESSSHNGTKTSL). The chain crosses the membrane as a helical span at residues 566-586 (EASLLDVLWLLLASVIFVPLF). Residues 587–592 (QKIPGG) lie on the Chloroplast intermembrane side of the membrane. The chain crosses the membrane as a helical span at residues 593–613 (SPVLGYLAAGILIGPYGLSII). The Stromal portion of the chain corresponds to 614–620 (RNVHGTK). A helical membrane pass occupies residues 621–641 (AIAEFGVVFLLFNIGLELSVE). Topologically, residues 642–648 (RLSSMKK) are chloroplast intermembrane. The helical transmembrane segment at 649–669 (YVFGLGSAQVLVTAAVIGLIT) threads the bilayer. The Stromal segment spans residues 670 to 678 (HYVAGQAGP). A helical transmembrane segment spans residues 679 to 699 (AAIVIGNGLALSSTAVVLQVL). Residues 700 to 713 (QERGESTSRHGRAT) are Chloroplast intermembrane-facing. The chain crosses the membrane as a helical span at residues 714 to 734 (FSVLLFQDLAVVVLLILIPLI). The Stromal portion of the chain corresponds to 735–746 (SPNSSKGGIGFQ). The chain crosses the membrane as a helical span at residues 747–767 (AIAEALGLAAIKAAVAITGII). The Chloroplast intermembrane segment spans residues 768-807 (AGGRLLLRPIYKQIAENRNAEIFSANTLLVILGTSLLTAR). Residues 808–828 (AGLSMALGAFLAGLLLAETEF) form a helical membrane-spanning segment. The Stromal portion of the chain corresponds to 829 to 841 (SLQVESDIAPYRG). The helical transmembrane segment at 842–862 (LLLGLFFMTVGMSIDPKLLLA) threads the bilayer. Topologically, residues 863-865 (NFP) are chloroplast intermembrane. Residues 866–886 (LIMGTLGLLLVGKTILVVIIG) form a helical membrane-spanning segment. Residues 887 to 898 (KLFGISIISAVR) are Stromal-facing. A helical membrane pass occupies residues 899–919 (VGLLLAPGGEFAFVAFGEAVN). Over 920 to 928 (QGIMTPQLS) the chain is Chloroplast intermembrane. The helical transmembrane segment at 929–949 (SLLFLVVGISMALTPWLAAGG) threads the bilayer. Residues 950-1174 (QLIASRFELQ…NQIIEGTLAI (225 aa)) lie on the Stromal side of the membrane. The 118-residue stretch at 975–1092 (QGHIIICGFG…EKAGATAVVP (118 aa)) folds into the RCK N-terminal domain. The segment at 1141–1174 (SLGYGFSRSTSKPKPPSPSETSDDNQIIEGTLAI) is disordered.

It belongs to the monovalent cation:proton antiporter 2 (CPA2) transporter (TC 2.A.37) family. KEA (TC 2.A.37.1) subfamily. In terms of processing, acetylated at Lys-170 by the stromal acetyltransferase enzyme NSI. As to expression, detected in leaves, stems and flowers. Expressed in shoots and roots. Mainly localized to leaf veins, hypocotyls, mesophylls and guard cells. Accumulates at high levels in small and dividing plastids (at protein level).

Its subcellular location is the plastid. The protein localises to the chloroplast inner membrane. It localises to the plastid inner membrane. It carries out the reaction K(+)(in) + H(+)(out) = K(+)(out) + H(+)(in). With respect to regulation, repressed by sodium ions Na(+). Electroneutral K(+)/H(+) efflux antiporter modulating monovalent cation and pH homeostasis in plastids, especially during plastid division and thylakoid membrane formation. Transports K(+) and Cs(+) preferentially relative to Na(+) or Li(+). May function in osmotic adjustment. Collaboratively with KEA1, adjusts alkaline stromal pH upon light to dark transitions in plastids. Together with KEA1, critical for chloroplast development, including chloroplast RNA-metabolism (e.g. rRNA maturation, polysome loading and RNA-protein interactions) and plastid gene expression (PGE), ion homeostasis, and photosynthesis. Contributes, during early seedling development, to the regulation of photosynthesis and abscisic acid- (ABA-) mediated primary root growth in a sucrose-dependent manner. Involved in the regulation of reactive oxygen and nitrogen species (ROS and RNS) metabolism. Required in roots for rapid hyperosmotic-induced Ca(2+) responses and for osmo-sensory potentiation in hyperosmotic conditions. May counteract resilience to drought and salt stress, involving photorespiratory pathway and stomata closure. The chain is K(+) efflux antiporter 2, chloroplastic from Arabidopsis thaliana (Mouse-ear cress).